We begin with the raw amino-acid sequence, 503 residues long: UDP-N-acetylmuramoylalanine--D-glutamate ligase (503 aa).

129–135 serves as a coordination point for ATP; the sequence is GTNGKTT.

This sequence belongs to the MurCDEF family.

Its subcellular location is the cytoplasm. The catalysed reaction is UDP-N-acetyl-alpha-D-muramoyl-L-alanine + D-glutamate + ATP = UDP-N-acetyl-alpha-D-muramoyl-L-alanyl-D-glutamate + ADP + phosphate + H(+). The protein operates within cell wall biogenesis; peptidoglycan biosynthesis. In terms of biological role, cell wall formation. Catalyzes the addition of glutamate to the nucleotide precursor UDP-N-acetylmuramoyl-L-alanine (UMA). This chain is UDP-N-acetylmuramoylalanine--D-glutamate ligase, found in Burkholderia cenocepacia (strain HI2424).